A 347-amino-acid chain; its full sequence is MDLQQQLEELKQQTLEHLTSLTGDHSKELQDLKVSVLGKKGTLTELLKGLKDLSADMRPIIGKQVNQVRDVLNTAFEEQSRIVEEAKIQAKLESESIDVTLPGRQMKLGNRHILTQTSEEIEDIFLGMGFQIVDGFEVEKDYYNFERMNLPKDHPARDMQDTFYITEEILLRTHTSPVQARTLDQHDFSKGPLKMVSPGRVFRRDTDDATHSHQFHQIEGLVVGKNISMGDLKGTLEMIIKKMFGEERKIRLRPSYFPFTEPSVEVDVSCFKCGGKGCNVCKGTGWIEILGAGMVHPRVLEMSGVNSEEYSGFAFGLGQERIAMLRYGINDIRGFYQGDMRFSEQFK.

Mg(2+) is bound at residue glutamate 261.

Belongs to the class-II aminoacyl-tRNA synthetase family. Phe-tRNA synthetase alpha subunit type 1 subfamily. In terms of assembly, tetramer of two alpha and two beta subunits. It depends on Mg(2+) as a cofactor.

The protein localises to the cytoplasm. It catalyses the reaction tRNA(Phe) + L-phenylalanine + ATP = L-phenylalanyl-tRNA(Phe) + AMP + diphosphate + H(+). The protein is Phenylalanine--tRNA ligase alpha subunit of Streptococcus uberis (strain ATCC BAA-854 / 0140J).